The primary structure comprises 264 residues: Apolipoprotein A-I (264 aa).

Residues 1–18 (MKAVVLTVAVFFLTGSQA) form the signal peptide. Tandem repeats lie at residues 67 to 88 (LKLLDNWDSLSSTVSKLREQIG) and 89 to 110 (PVTQEFWDKLEKDTVSLRQEMN). The 10 X approximate tandem repeats stretch occupies residues 67 to 264 (LKLLDNWDSL…DEATKKLTTQ (198 aa)). The residue at position 109 (methionine 109) is a Methionine sulfoxide. One copy of the 3; half-length repeat lies at 111–121 (KDLEEVKLKVQ). 3 consecutive repeat copies span residues 122 to 143 (PYLDEFQKRWQEDVERYRQQVE), 144 to 165 (PLGTELREGARQKLQELHEKLS), and 166 to 187 (PLGQELRDRARAHVDALRTHLA). The 7; truncated repeat unit spans residues 188 to 207 (PYSDELRQRLAARLEALKES). Residues 208–229 (SSLADYQAKATEHLSALGEKAK) form repeat 8. Residues 230–240 (PALEDLRQGLL) form a 9; half-length repeat. Copy 10 of the repeat occupies 241-264 (PVLENLKMSFWSAVDEATKKLTTQ).

Belongs to the apolipoprotein A1/A4/E family. In terms of assembly, homodimer. Interacts with APOA1BP and CLU. Component of a sperm activating protein complex (SPAP), consisting of APOA1, an immunoglobulin heavy chain, an immunoglobulin light chain and albumin. Interacts with NDRG1. Interacts with SCGB3A2. Interacts with NAXE and YJEFN3. In terms of processing, glycosylated. Palmitoylated. Post-translationally, phosphorylation sites are present in the extracellular medium.

Its subcellular location is the secreted. Its function is as follows. Participates in the reverse transport of cholesterol from tissues to the liver for excretion by promoting cholesterol efflux from tissues and by acting as a cofactor for the lecithin cholesterol acyltransferase (LCAT). As part of the SPAP complex, activates spermatozoa motility. The chain is Apolipoprotein A-I (ApoA1) from Marmota monax (Woodchuck).